Here is a 796-residue protein sequence, read N- to C-terminus: MSDKIQEEILGLVSRSNFKQCYAKLGQLQKQFPNALYFKILETYVKFKQSPGKFDYNKLLEEPYGLKGTTITGDTRSLEFLHNFFVELGKYDEALHVYERGNFKFPSYELSYHWFMKALEDSNYNQMSKASLQLAKYSDSGNLPKRAYYFWNAISILAVSRFQENTLSDPKKILLSRLARQSLLDLKPFQNVQEIIVYCLVLDELFPQSREISEEIVAITFANFDTSVNLYLKNFILKHTKLLNSPQKLFEVCSKLIEKGLDDYELITNLIDAAYKLSKSKDEVKQWIDENLGDSRNTRLARLKLDIMYTDSVSESSLSYYLSKYHNKPCCSIDLNHYSGHINIDMLKSIMSKYDPEDKDLIHHCNILELGLIGSDSINNYNKFKGTLEKKSVTDYSSCSTFLLEIVKDKCKKTNPELKDVLLCITILENYQAKDPHNFDTMCWLIVLYMYLGLVPDAYFHFINLKIKNVQTDSLDYMIFSRFSTLFPNKQSDFYSKTFHEHNNLYDTSLANLPRYIQVAFERNSYSKILGMLEMRDKLMKSYTRWTKTLENLQFSRLCNDKRGHLLQKLHEDWRSLEMTQSVSFSDNRDFSILDENFAQFLNRGKILEYANLNEESIFLTLIRELIIEALPNGEKTEQISALLKKLPSINLEELLNNNLTEVESASFLIFFEIYENNGKNLHDLISRLMKVPINAKQNWMVSHTYLTKMATLKTLDSLKRIKDKEIQKLIKNSLKELRSCCDDVFKGYSKALVQAYEELKKDECGNLLKELDVKAENVKNIKNSLLGIQKSVRNL.

Ser-2 carries the post-translational modification N-acetylserine.

It belongs to the MDM20/NAA25 family. As to quaternary structure, component of the N-terminal acetyltransferase B (NatB) complex, which is composed of NAT3 and MDM20.

It localises to the cytoplasm. Its function is as follows. Non-catalytic subunit of the NatB N-terminal acetyltransferase, which catalyzes acetylation of the amino-terminal methionine residues of all proteins beginning with Met-Asp or Met-Glu and of some proteins beginning with Met-Asn or Met-Met. NatB acetylates TPM1 protein and regulates tropomyocin-actin interactions. MDM20 is required for mitochondrial inheritance during budding and together with TPM1, is essential for the integrity and assembly of actin cables. Genetically interacts with CIN8. In Saccharomyces cerevisiae (strain ATCC 204508 / S288c) (Baker's yeast), this protein is N-terminal acetyltransferase B complex subunit MDM20 (MDM20).